The following is a 479-amino-acid chain: Kynurenine 3-monooxygenase (479 aa).

This sequence belongs to the aromatic-ring hydroxylase family. KMO subfamily. It depends on FAD as a cofactor.

Its subcellular location is the mitochondrion outer membrane. The catalysed reaction is L-kynurenine + NADPH + O2 + H(+) = 3-hydroxy-L-kynurenine + NADP(+) + H2O. The protein operates within cofactor biosynthesis; NAD(+) biosynthesis; quinolinate from L-kynurenine: step 1/3. Functionally, catalyzes the hydroxylation of L-kynurenine (L-Kyn) to form 3-hydroxy-L-kynurenine (L-3OHKyn). Required for synthesis of quinolinic acid. The chain is Kynurenine 3-monooxygenase from Chaetomium globosum (strain ATCC 6205 / CBS 148.51 / DSM 1962 / NBRC 6347 / NRRL 1970) (Soil fungus).